The sequence spans 306 residues: Palmitoyl-protein thioesterase ABHD10, mitochondrial (306 aa).

Residues Met1–Lys52 constitute a mitochondrion transit peptide. Residues Ile78–Thr177 enclose the AB hydrolase-1 domain. Catalysis depends on charge relay system residues Ser152, Asp249, and His279.

It belongs to the AB hydrolase superfamily.

Its subcellular location is the mitochondrion. The enzyme catalyses S-hexadecanoyl-L-cysteinyl-[protein] + H2O = L-cysteinyl-[protein] + hexadecanoate + H(+). It carries out the reaction mycophenolic acid O-acyl-beta-D-glucuronide + H2O = mycophenolate + D-glucuronate + H(+). Its activity is regulated as follows. Inhibited by palmostatin-B. In terms of biological role, acts as an acyl-protein thioesterase that hydrolyzes fatty acids from acylated residues in proteins. Regulates the mitochondrial S-depalmitoylation of the nucleophilic active site residue of peroxiredoxin-5/PRDX5, a key antioxidant protein, therefore modulating mitochondrial antioxidant ability. Also catalyzes the deglucuronidation of mycophenolic acid acyl-glucuronide, an active metabolite of the immunosuppressant drug mycophenolate. In Bos taurus (Bovine), this protein is Palmitoyl-protein thioesterase ABHD10, mitochondrial (ABHD10).